Consider the following 432-residue polypeptide: Adenylosuccinate synthetase (432 aa).

Residues 12–18 and 40–42 each bind GTP; these read GDEGKGK and GHT. D13 (proton acceptor) is an active-site residue. Mg(2+)-binding residues include D13 and G40. IMP is bound by residues 13 to 16, 38 to 41, T132, R146, Q226, T241, and R305; these read DEGK and NAGH. H41 acts as the Proton donor in catalysis. 301-307 contacts substrate; it reads TVTGRKR. Residues R307, 333-335, and 415-417 contribute to the GTP site; these read KLD and STS.

This sequence belongs to the adenylosuccinate synthetase family. In terms of assembly, homodimer. Requires Mg(2+) as cofactor.

The protein localises to the cytoplasm. It carries out the reaction IMP + L-aspartate + GTP = N(6)-(1,2-dicarboxyethyl)-AMP + GDP + phosphate + 2 H(+). Its pathway is purine metabolism; AMP biosynthesis via de novo pathway; AMP from IMP: step 1/2. Plays an important role in the de novo pathway of purine nucleotide biosynthesis. Catalyzes the first committed step in the biosynthesis of AMP from IMP. The polypeptide is Adenylosuccinate synthetase (Allorhizobium ampelinum (strain ATCC BAA-846 / DSM 112012 / S4) (Agrobacterium vitis (strain S4))).